Reading from the N-terminus, the 117-residue chain is Non-specific lipid-transfer protein 3 (117 aa).

Positions 1–25 are cleaved as a signal peptide; the sequence is MAGLVKLSCLVLACMIVAGPIATNA. Cystine bridges form between cysteine 29/cysteine 76, cysteine 39/cysteine 53, cysteine 54/cysteine 99, and cysteine 74/cysteine 113.

Belongs to the plant LTP family.

Plant non-specific lipid-transfer proteins transfer phospholipids as well as galactolipids across membranes. May play a role in wax or cutin deposition in the cell walls of expanding epidermal cells and certain secretory tissues. In Brassica napus (Rape), this protein is Non-specific lipid-transfer protein 3 (LTP3).